Consider the following 432-residue polypeptide: Enolase (432 aa).

Gln-163 contacts (2R)-2-phosphoglycerate. Glu-205 functions as the Proton donor in the catalytic mechanism. Residues Asp-242, Glu-285, and Asp-312 each coordinate Mg(2+). The (2R)-2-phosphoglycerate site is built by Lys-337, Arg-366, Ser-367, and Lys-388. Catalysis depends on Lys-337, which acts as the Proton acceptor.

It belongs to the enolase family. Requires Mg(2+) as cofactor.

The protein resides in the cytoplasm. The protein localises to the secreted. Its subcellular location is the cell surface. It catalyses the reaction (2R)-2-phosphoglycerate = phosphoenolpyruvate + H2O. It functions in the pathway carbohydrate degradation; glycolysis; pyruvate from D-glyceraldehyde 3-phosphate: step 4/5. Catalyzes the reversible conversion of 2-phosphoglycerate (2-PG) into phosphoenolpyruvate (PEP). It is essential for the degradation of carbohydrates via glycolysis. In Bifidobacterium longum subsp. infantis (strain ATCC 15697 / DSM 20088 / JCM 1222 / NCTC 11817 / S12), this protein is Enolase.